The chain runs to 142 residues: Large ribosomal subunit protein uL13 (142 aa).

It belongs to the universal ribosomal protein uL13 family. As to quaternary structure, part of the 50S ribosomal subunit.

This protein is one of the early assembly proteins of the 50S ribosomal subunit, although it is not seen to bind rRNA by itself. It is important during the early stages of 50S assembly. In Hahella chejuensis (strain KCTC 2396), this protein is Large ribosomal subunit protein uL13.